Reading from the N-terminus, the 208-residue chain is Thymidylate kinase (208 aa).

An ATP-binding site is contributed by 10–17 (GLEGAGKS).

This sequence belongs to the thymidylate kinase family.

The enzyme catalyses dTMP + ATP = dTDP + ADP. Phosphorylation of dTMP to form dTDP in both de novo and salvage pathways of dTTP synthesis. In Glaesserella parasuis serovar 5 (strain SH0165) (Haemophilus parasuis), this protein is Thymidylate kinase.